The primary structure comprises 105 residues: uncharacterized protein (105 aa).

Positions 58–105 are disordered; it reads YRKKKPNHSRDNPRINSNLSTNYAQAKSVERSRSNSLNSGPNPLENAT. Composition is skewed to polar residues over residues 71–82 and 91–105; these read RINSNLSTNYAQ and SNSL…ENAT.

The protein localises to the mitochondrion. This is an uncharacterized protein from Arabidopsis thaliana (Mouse-ear cress).